Consider the following 67-residue polypeptide: Small ribosomal subunit protein bS21 (67 aa).

This sequence belongs to the bacterial ribosomal protein bS21 family.

This chain is Small ribosomal subunit protein bS21, found in Oleidesulfovibrio alaskensis (strain ATCC BAA-1058 / DSM 17464 / G20) (Desulfovibrio alaskensis).